The primary structure comprises 404 residues: Deoxyguanosinetriphosphate triphosphohydrolase-like protein (404 aa).

Residues 69–217 form the HD domain; it reads RLTHSLEVAQ…AGIADDIAYD (149 aa).

This sequence belongs to the dGTPase family. Type 2 subfamily.

The sequence is that of Deoxyguanosinetriphosphate triphosphohydrolase-like protein from Rhodopseudomonas palustris (strain BisB18).